The sequence spans 423 residues: AP-1 complex subunit mu-2 (423 aa).

In terms of domain architecture, MHD spans 168–421 (KNEVFIDVIE…ITQSGDYQLR (254 aa)).

The protein belongs to the adaptor complexes medium subunit family. Adaptor protein complex 1 (AP-1) is a heterotetramer composed of two large adaptins (gamma-type subunit AP1G1 and beta-type subunit AP1B1), a medium adaptin (mu-type subunit AP1M1 or AP1M2) and a small adaptin (sigma-type subunit AP1S1 or AP1S2 or AP1S3). Interacts with P2X4. Post-translationally, phosphorylation of membrane-bound AP1M1/AP1M2 increases its affinity for sorting signals.

The protein resides in the golgi apparatus. The protein localises to the cytoplasmic vesicle. It localises to the clathrin-coated vesicle membrane. Functionally, subunit of clathrin-associated adaptor protein complex 1 that plays a role in protein sorting in the trans-Golgi network (TGN) and endosomes. The AP complexes mediate the recruitment of clathrin to membranes and the recognition of sorting signals within the cytosolic tails of transmembrane cargo molecules. The chain is AP-1 complex subunit mu-2 (Ap1m2) from Rattus norvegicus (Rat).